A 90-amino-acid chain; its full sequence is DNA-binding protein HU (90 aa).

Residues 57-90 (ARKGVNPQTRKPITIPERKVPKFKPGKALKEKVK) are disordered.

It belongs to the bacterial histone-like protein family.

Functionally, histone-like DNA-binding protein which is capable of wrapping DNA to stabilize it, and thus to prevent its denaturation under extreme environmental conditions. The polypeptide is DNA-binding protein HU (hup) (Thermotoga maritima (strain ATCC 43589 / DSM 3109 / JCM 10099 / NBRC 100826 / MSB8)).